Here is a 124-residue protein sequence, read N- to C-terminus: Fluoride-specific ion channel FluC 2 (124 aa).

4 consecutive transmembrane segments (helical) span residues 1–21, 36–58, 63–85, and 104–124; these read MNFL…YAIT, SNLP…FIFG, VFIY…TMNT, and LSSY…AILF. 2 residues coordinate Na(+): glycine 75 and threonine 78.

This sequence belongs to the fluoride channel Fluc/FEX (TC 1.A.43) family. Heterodimer composed of FluC1 and FluC2. Neither FluC1 nor FluC2 alone catalyzes fluoride efflux from liposomes.

The protein localises to the cell membrane. The enzyme catalyses fluoride(in) = fluoride(out). Na(+) is not transported, but it plays an essential structural role and its presence is essential for fluoride channel function. Functionally, fluoride-specific ion channel. Important for reducing fluoride concentration in the cell, thus reducing its toxicity. The chain is Fluoride-specific ion channel FluC 2 from Lactobacillus acidophilus (strain ATCC 700396 / NCK56 / N2 / NCFM).